The sequence spans 287 residues: Elongation factor Ts (287 aa).

The tract at residues 80-83 (TDFL) is involved in Mg(2+) ion dislocation from EF-Tu.

Belongs to the EF-Ts family.

The protein resides in the cytoplasm. Its function is as follows. Associates with the EF-Tu.GDP complex and induces the exchange of GDP to GTP. It remains bound to the aminoacyl-tRNA.EF-Tu.GTP complex up to the GTP hydrolysis stage on the ribosome. The protein is Elongation factor Ts of Pseudomonas syringae pv. tomato (strain ATCC BAA-871 / DC3000).